The sequence spans 431 residues: Enolase (431 aa).

Residue Gln167 coordinates (2R)-2-phosphoglycerate. The Proton donor role is filled by Glu209. Mg(2+)-binding residues include Asp246, Glu290, and Asp317. The (2R)-2-phosphoglycerate site is built by Lys342, Arg371, Ser372, and Lys393. The active-site Proton acceptor is the Lys342.

The protein belongs to the enolase family. Component of the RNA degradosome, a multiprotein complex involved in RNA processing and mRNA degradation. Requires Mg(2+) as cofactor.

It is found in the cytoplasm. Its subcellular location is the secreted. It localises to the cell surface. It catalyses the reaction (2R)-2-phosphoglycerate = phosphoenolpyruvate + H2O. It functions in the pathway carbohydrate degradation; glycolysis; pyruvate from D-glyceraldehyde 3-phosphate: step 4/5. Catalyzes the reversible conversion of 2-phosphoglycerate (2-PG) into phosphoenolpyruvate (PEP). It is essential for the degradation of carbohydrates via glycolysis. The chain is Enolase from Erwinia tasmaniensis (strain DSM 17950 / CFBP 7177 / CIP 109463 / NCPPB 4357 / Et1/99).